The chain runs to 98 residues: UPF0235 protein Asuc_1977 (98 aa).

The protein belongs to the UPF0235 family.

The polypeptide is UPF0235 protein Asuc_1977 (Actinobacillus succinogenes (strain ATCC 55618 / DSM 22257 / CCUG 43843 / 130Z)).